Here is a 354-residue protein sequence, read N- to C-terminus: UDP-3-O-acylglucosamine N-acyltransferase (354 aa).

H245 acts as the Proton acceptor in catalysis.

This sequence belongs to the transferase hexapeptide repeat family. LpxD subfamily. Homotrimer.

The enzyme catalyses a UDP-3-O-[(3R)-3-hydroxyacyl]-alpha-D-glucosamine + a (3R)-hydroxyacyl-[ACP] = a UDP-2-N,3-O-bis[(3R)-3-hydroxyacyl]-alpha-D-glucosamine + holo-[ACP] + H(+). It participates in bacterial outer membrane biogenesis; LPS lipid A biosynthesis. In terms of biological role, catalyzes the N-acylation of UDP-3-O-acylglucosamine using 3-hydroxyacyl-ACP as the acyl donor. Is involved in the biosynthesis of lipid A, a phosphorylated glycolipid that anchors the lipopolysaccharide to the outer membrane of the cell. The protein is UDP-3-O-acylglucosamine N-acyltransferase of Anaeromyxobacter sp. (strain K).